Consider the following 291-residue polypeptide: Ribosomal RNA small subunit methyltransferase I (291 aa).

It belongs to the methyltransferase superfamily. RsmI family.

The protein resides in the cytoplasm. It carries out the reaction cytidine(1402) in 16S rRNA + S-adenosyl-L-methionine = 2'-O-methylcytidine(1402) in 16S rRNA + S-adenosyl-L-homocysteine + H(+). Catalyzes the 2'-O-methylation of the ribose of cytidine 1402 (C1402) in 16S rRNA. In Neisseria meningitidis serogroup B (strain ATCC BAA-335 / MC58), this protein is Ribosomal RNA small subunit methyltransferase I.